The following is a 184-amino-acid chain: Cyclin-dependent kinase inhibitor 1 (184 aa).

Low complexity predominate over residues 85–98 (ISSTTLTPLSSPST). Residues 85-184 (ISSTTLTPLS…IRTRSSCSPY (100 aa)) form a disordered region.

Belongs to the CDI family. Interacts with cyd-1; the interaction is direct. In terms of tissue distribution, in embryos, expression is first seen in pharyngeal primordium and later in all differentiating cells. Post embryonic expression corresponds to developmental patterns of cell cycle progression in many tissues including sex myoblasts, distal tip cells, vulval cells, seam cells, neurons, intestine cells and hypodermal cells.

The protein resides in the nucleus. In terms of biological role, negative cell-cycle regulator that functions at the G1-to-S-phase transition. Required for suspension of the cell cycle in dauer larvae and starved L1 larvae. In vulval precursor cells (VPCs), a pathway of heterochronic genes acts via cki-1 to maintain VPCs in G1 during the L2 larval stage. Cul-2 may function in ubiquitin-mediated degradation by targeting cki-1 for degradation. Involved in distal tip cell development by repressing and modulating cye-1/cdk-2 activity levels in Z1.aa/Z4.pp and in Z1.ap/Z4.pa. This Caenorhabditis elegans protein is Cyclin-dependent kinase inhibitor 1.